Here is a 369-residue protein sequence, read N- to C-terminus: H-2 class I histocompatibility antigen, K-K alpha chain (369 aa).

A signal peptide spans 1 to 21 (MAPCMLLLLLAAALAPTQTRA). The segment at 22–111 (GPHSLRYFHT…ALRYYNQSAG (90 aa)) is alpha-1. Residues 22 to 305 (GPHSLRYFHT…EPPPSTVSNT (284 aa)) lie on the Extracellular side of the membrane. N-linked (GlcNAc...) asparagine glycosylation is present at Asn-107. The interval 112–203 (GSHTFQRMYG…QLGNATLPRT (92 aa)) is alpha-2. Cys-122 and Cys-185 are oxidised to a cystine. N-linked (GlcNAc...) asparagine glycosylation is present at Asn-197. The tract at residues 204–295 (DSPKAHVTRH…GLPEPLTLRW (92 aa)) is alpha-3. Residues 206 to 294 (PKAHVTRHSR…QGLPEPLTLR (89 aa)) form the Ig-like C1-type domain. A disulfide bridge connects residues Cys-224 and Cys-280. The interval 296-305 (EPPPSTVSNT) is connecting peptide. Residues 306–328 (VIIAVLVVLGAAIVTGAVVAFVM) traverse the membrane as a helical segment. At 329-369 (KMRRRNTGGKGGDYALAPGSQTSDLSLPDCKVMVHDPHSLA) the chain is on the cytoplasmic side. Phosphoserine is present on residues Ser-351 and Ser-354.

The protein belongs to the MHC class I family. In terms of assembly, heterodimer of an alpha chain and a beta chain (beta-2-microglobulin).

It localises to the membrane. In terms of biological role, involved in the presentation of foreign antigens to the immune system. In Mus musculus (Mouse), this protein is H-2 class I histocompatibility antigen, K-K alpha chain (H2-K1).